We begin with the raw amino-acid sequence, 307 residues long: NAD(+) hydrolase TcpC (307 aa).

Residues 22 to 42 (YNILFFIFLSIAIPFLLFLAW) form a helical membrane-spanning segment. The TIR domain occupies 169–303 (THYDFFISHA…EIARELAEIA (135 aa)). NAD(+) contacts are provided by residues 178 to 179 (AK) and Glu-208. Residue Glu-244 is part of the active site.

As to quaternary structure, interacts with host MYD88. Interacts with host TLR4.

The protein localises to the secreted. Its subcellular location is the membrane. The catalysed reaction is NAD(+) + H2O = ADP-D-ribose + nicotinamide + H(+). The enzyme catalyses NADP(+) + H2O = ADP-D-ribose 2'-phosphate + nicotinamide + H(+). Virulence factor that suppresses host Toll-like receptor (TLR)-mediated cytokine production upon infection, thereby increasing bacterial burden in the urinary tract and promoting renal tissue damage. Acts as a NAD(+) hydrolase (NADase) by catalyzing cleavage of NAD(+) into ADP-D-ribose (ADPR) and nicotinamide. Also able to hydrolyze NADP(+), but not other NAD(+)-related molecules. The protein is NAD(+) hydrolase TcpC of Escherichia coli O6:H1 (strain CFT073 / ATCC 700928 / UPEC).